A 151-amino-acid chain; its full sequence is 1,4-dihydroxy-2-naphthoyl-CoA hydrolase (151 aa).

Residue Asp-23 is part of the active site.

Belongs to the 4-hydroxybenzoyl-CoA thioesterase family. DHNA-CoA hydrolase subfamily.

The enzyme catalyses 1,4-dihydroxy-2-naphthoyl-CoA + H2O = 1,4-dihydroxy-2-naphthoate + CoA + H(+). Its pathway is cofactor biosynthesis; phylloquinone biosynthesis. The protein operates within quinol/quinone metabolism; 1,4-dihydroxy-2-naphthoate biosynthesis; 1,4-dihydroxy-2-naphthoate from chorismate: step 7/7. Its function is as follows. Catalyzes the hydrolysis of 1,4-dihydroxy-2-naphthoyl-CoA (DHNA-CoA) to 1,4-dihydroxy-2-naphthoate (DHNA), a reaction involved in phylloquinone (vitamin K1) biosynthesis. The polypeptide is 1,4-dihydroxy-2-naphthoyl-CoA hydrolase (Prochlorococcus marinus (strain MIT 9211)).